Here is a 333-residue protein sequence, read N- to C-terminus: F420-dependent glucose-6-phosphate dehydrogenase (333 aa).

D37 contacts coenzyme F420-(gamma-Glu)n. H38 functions as the Proton donor in the catalytic mechanism. Coenzyme F420-(gamma-Glu)n is bound by residues T74 and S105–G106. Residue E107 is the Proton acceptor of the active site. Residues N110, G174–G175, and V177–V178 each bind coenzyme F420-(gamma-Glu)n. Residues T192, K195, K256, and R280 each contribute to the substrate site.

This sequence belongs to the F420-dependent glucose-6-phosphate dehydrogenase family. In terms of assembly, homodimer.

It carries out the reaction oxidized coenzyme F420-(gamma-L-Glu)(n) + D-glucose 6-phosphate + H(+) = 6-phospho-D-glucono-1,5-lactone + reduced coenzyme F420-(gamma-L-Glu)(n). In terms of biological role, catalyzes the coenzyme F420-dependent oxidation of glucose 6-phosphate (G6P) to 6-phosphogluconolactone. The sequence is that of F420-dependent glucose-6-phosphate dehydrogenase from Amycolatopsis mediterranei (strain U-32).